The sequence spans 237 residues: Purine nucleoside phosphorylase DeoD-type (237 aa).

H4 contributes to the a purine D-ribonucleoside binding site. Residues G20, R24, R43, and 87 to 90 (RVGT) contribute to the phosphate site. Residues 179-181 (EME) and 203-204 (SD) contribute to the a purine D-ribonucleoside site. D204 serves as the catalytic Proton donor.

It belongs to the PNP/UDP phosphorylase family. Homohexamer; trimer of homodimers.

The enzyme catalyses a purine D-ribonucleoside + phosphate = a purine nucleobase + alpha-D-ribose 1-phosphate. It carries out the reaction a purine 2'-deoxy-D-ribonucleoside + phosphate = a purine nucleobase + 2-deoxy-alpha-D-ribose 1-phosphate. Catalyzes the reversible phosphorolytic breakdown of the N-glycosidic bond in the beta-(deoxy)ribonucleoside molecules, with the formation of the corresponding free purine bases and pentose-1-phosphate. This Streptococcus uberis (strain ATCC BAA-854 / 0140J) protein is Purine nucleoside phosphorylase DeoD-type.